Reading from the N-terminus, the 130-residue chain is Small ribosomal subunit protein uS8 (130 aa).

This sequence belongs to the universal ribosomal protein uS8 family.

This is Small ribosomal subunit protein uS8 (RPS15A) from Paracentrotus lividus (Common sea urchin).